Here is a 447-residue protein sequence, read N- to C-terminus: tRNA-2-methylthio-N(6)-dimethylallyladenosine synthase (447 aa).

One can recognise an MTTase N-terminal domain in the interval 8 to 126; it reads KKVVTLAYGC…FQRLLEEAEE (119 aa). The [4Fe-4S] cluster site is built by Cys-17, Cys-53, Cys-87, Cys-162, Cys-166, and Cys-169. Residues 148-378 form the Radical SAM core domain; it reads AKGKLKAYVN…ITVQNAQSLA (231 aa). The region spanning 381–444 is the TRAM domain; sequence QEMIGKTCEV…SWTLFGECRA (64 aa).

Belongs to the methylthiotransferase family. MiaB subfamily. Monomer. It depends on [4Fe-4S] cluster as a cofactor.

It localises to the cytoplasm. It carries out the reaction N(6)-dimethylallyladenosine(37) in tRNA + (sulfur carrier)-SH + AH2 + 2 S-adenosyl-L-methionine = 2-methylsulfanyl-N(6)-dimethylallyladenosine(37) in tRNA + (sulfur carrier)-H + 5'-deoxyadenosine + L-methionine + A + S-adenosyl-L-homocysteine + 2 H(+). Its function is as follows. Catalyzes the methylthiolation of N6-(dimethylallyl)adenosine (i(6)A), leading to the formation of 2-methylthio-N6-(dimethylallyl)adenosine (ms(2)i(6)A) at position 37 in tRNAs that read codons beginning with uridine. The protein is tRNA-2-methylthio-N(6)-dimethylallyladenosine synthase of Desulfitobacterium hafniense (strain Y51).